Reading from the N-terminus, the 361-residue chain is Protein-L-isoaspartate O-methyltransferase domain-containing protein 2 (361 aa).

The N-myristoyl glycine moiety is linked to residue Gly2. The active site involves Ser64. AdoMet binding motif regions lie at residues 85 to 94 (LNLGSGTGYL), 160 to 164 (YDRVY), and 181 to 191 (LKVGGILVMPL). The interval 240–250 (VRSLQDLARIA) is BC-box. Residues 303–312 (SNPSDDNSSG) show a composition bias toward polar residues. The disordered stretch occupies residues 303–335 (SNPSDDNSSGDLEEERREEEATTPPDAKPEPPV). Positions 345–348 (LPLP) are CUL-box.

Belongs to the methyltransferase superfamily. L-isoaspartyl/D-aspartyl protein methyltransferase family.

Its subcellular location is the cytoplasm. May act as a substrate recognition component of an ECS (Elongin BC-CUL5-SOCS-box protein) E3 ubiquitin ligase complex which mediates the ubiquitination and subsequent proteasomal degradation of target proteins. May bind to the methyltransferase cofactor S-adenosylmethionine (AdoMet) via the N-terminal AdoMet binding motif, but probably does not display methyltransferase activity. The sequence is that of Protein-L-isoaspartate O-methyltransferase domain-containing protein 2 (PCMTD2) from Bos taurus (Bovine).